Here is a 474-residue protein sequence, read N- to C-terminus: Tumor necrosis factor receptor superfamily member 1B (474 aa).

Positions 1-22 (MAPAALWVALVVELQLWATGHT) are cleaved as a signal peptide. The Extracellular segment spans residues 23-258 (VPAKVVLTPY…PIIEPSITGG (236 aa)). The O-linked (GalNAc...) threonine glycan is linked to Thr-30. TNFR-Cys repeat units follow at residues 39–77 (QCQISQEYYDKKAQMCCAKCPPGQYAKHFCNKTSDTVCA), 78–119 (DCAA…NRVC), 120–164 (ACNA…VICS), and 165–203 (ACAPGTFSDTTSSTDVCRPHRICSILAIPGNASTDAVCA). Cystine bridges form between Cys-40-Cys-54, Cys-55-Cys-68, Cys-58-Cys-76, Cys-79-Cys-94, Cys-97-Cys-111, Cys-101-Cys-119, Cys-121-Cys-127, Cys-136-Cys-145, Cys-139-Cys-163, and Cys-166-Cys-181. An N-linked (GlcNAc...) asparagine glycan is attached at Asn-69. Asn-110 carries an N-linked (GlcNAc...) asparagine glycan. The N-linked (GlcNAc...) asparagine glycan is linked to Asn-195. Thr-208 and Thr-224 each carry an O-linked (GalNAc...) threonine glycan. Residues 220–239 (QPEPTRSQPMDQEPGPSQTP) are compositionally biased toward polar residues. Positions 220–241 (QPEPTRSQPMDQEPGPSQTPHI) are disordered. Residues 259-288 (ISLPIGLIVGLTTLGLLMLGLANCFILVQR) form a helical membrane-spanning segment. Over 289–474 (KKKPSCLQRE…WYDQIAVKVP (186 aa)) the chain is Cytoplasmic. Disordered regions lie at residues 321 to 378 (LTTA…GSHG) and 397 to 464 (SQCS…NQPG). Low complexity-rich tracts occupy residues 324–338 (APSSSSSSLESSASA) and 366–378 (GSRSSDSSHGSHG). The residue at position 331 (Ser-331) is a Phosphoserine. Residues 429 to 442 (ECPSQSQWETTETL) show a composition bias toward polar residues.

Binds to TRAF2. Interacts with BMX. Interacts (activated form) with XPNPEP3.

It localises to the membrane. Receptor with high affinity for TNFSF2/TNF-alpha and approximately 5-fold lower affinity for homotrimeric TNFSF1/lymphotoxin-alpha. The TRAF1/TRAF2 complex recruits the apoptotic suppressors BIRC2 and BIRC3 to TNFRSF1B/TNFR2. The chain is Tumor necrosis factor receptor superfamily member 1B (Tnfrsf1b) from Rattus norvegicus (Rat).